Reading from the N-terminus, the 485-residue chain is Glucagon receptor (485 aa).

The N-terminal stretch at 1-26 (MLLTQLHCPYLLLLLVVLSCLPKAPS) is a signal peptide. The Extracellular portion of the chain corresponds to 27–137 (AQVMDFLFEK…EIEVQKGVAK (111 aa)). Cystine bridges form between C44–C68, C59–C101, and C82–C122. 4 N-linked (GlcNAc...) asparagine glycosylation sites follow: N47, N60, N75, and N79. The chain crosses the membrane as a helical span at residues 138 to 162 (MYSSYQVMYTVGYSLSLGALLLALV). Topologically, residues 163-174 (ILLGLRKLHCTR) are cytoplasmic. A helical membrane pass occupies residues 175 to 199 (NYIHGNLFASFVLKAGSVLVIDWLL). The Extracellular segment spans residues 200–226 (KTRYSQKIGDDLSVSVWLSDGAVAGCR). An intrachain disulfide couples C225 to C295. A helical transmembrane segment spans residues 227 to 250 (VATVIMQYGIIANYCWLLVEGVYL). Residues 251-264 (YSLLSITTFSEKSF) lie on the Cytoplasmic side of the membrane. A helical transmembrane segment spans residues 265–286 (FSLYLCIGWGSPLLFVIPWVVV). Residues 287–304 (KCLFENVQCWTSNDNMGF) lie on the Extracellular side of the membrane. A helical membrane pass occupies residues 305-327 (WWILRIPVLLAILINFFIFVRII). The Cytoplasmic segment spans residues 328-351 (HLLVAKLRAHQMHYADYKFRLARS). An important for allosteric inhibitor binding region spans residues 351-354 (STLT). The chain crosses the membrane as a helical span at residues 352–370 (TLTLIPLLGVHEVVFAFVT). The Extracellular segment spans residues 371-382 (DEHAQGTLRSTK). The helical transmembrane segment at 383–403 (LFFDLFFSSFQGLLVAVLYCF) threads the bilayer. Residues 404–485 (LNKEVQAELL…SLPRLADSPT (82 aa)) lie on the Cytoplasmic side of the membrane. Positions 455-485 (MSAGSSSGTGCEPSAKTSLASSLPRLADSPT) are disordered. Positions 456–475 (SAGSSSGTGCEPSAKTSLAS) are enriched in polar residues. Phosphoserine is present on residues S460 and S476.

This sequence belongs to the G-protein coupled receptor 2 family. In terms of processing, ligand-binding promotes phosphorylation of serine residues in the C-terminal cytoplasmic domain. Phosphorylation is important for receptor endocytosis after ligand-binding.

It localises to the cell membrane. G-protein coupled receptor for glucagon that plays a central role in the regulation of blood glucose levels and glucose homeostasis. Regulates the rate of hepatic glucose production by promoting glycogen hydrolysis and gluconeogenesis. Plays an important role in mediating the responses to fasting. Ligand binding causes a conformation change that triggers signaling via guanine nucleotide-binding proteins (G proteins) and modulates the activity of down-stream effectors, such as adenylate cyclase. Promotes activation of adenylate cyclase. Besides, plays a role in signaling via a phosphatidylinositol-calcium second messenger system. The polypeptide is Glucagon receptor (Gcgr) (Rattus norvegicus (Rat)).